The primary structure comprises 550 residues: Arginine--tRNA ligase (550 aa).

Positions 130 to 140 match the 'HIGH' region motif; sequence ANPTGPIHIGG.

The protein belongs to the class-I aminoacyl-tRNA synthetase family. As to quaternary structure, monomer.

It is found in the cytoplasm. The enzyme catalyses tRNA(Arg) + L-arginine + ATP = L-arginyl-tRNA(Arg) + AMP + diphosphate. The protein is Arginine--tRNA ligase of Mycobacterium sp. (strain JLS).